A 673-amino-acid polypeptide reads, in one-letter code: Leucine zipper putative tumor suppressor 3 (673 aa).

Disordered regions lie at residues 1 to 157 (MAKL…CSEP), 172 to 239 (FHSM…QHLA), and 251 to 317 (IGTA…PPSP). A compositionally biased stretch (basic and acidic residues) spans 79 to 92 (SRERPGRYPSEDKG). A compositionally biased stretch (polar residues) spans 173-186 (HSMQNLCPPQTNGT). Positions 215–235 (GLSDSGRNSLTSLPTYSSSYS) are enriched in low complexity. Residues 258–269 (SGSGGSSGGGSG) are compositionally biased toward gly residues. Low complexity predominate over residues 274 to 294 (GTSDSGRASSKSGSSSSMGRP). Residues 295-307 (GHLGSGEGGGGGL) show a composition bias toward gly residues. Phosphoserine is present on residues S316 and S318. 2 coiled-coil regions span residues 317–496 (PSAL…SLRD) and 571–639 (RALR…RLRE). Positions 635-673 (RRLRERGAAGGASTPTPQHGEEKKAWTPSRLERIESTEI) are disordered. A compositionally biased stretch (basic and acidic residues) spans 653-673 (HGEEKKAWTPSRLERIESTEI).

The protein belongs to the LZTS3 family. As to quaternary structure, interacts (via C-terminus) with SHANK3 (via PDZ domain). Interacts (via coiled coil) with SIPA1L1. Can form homooligomers.

It is found in the synapse. The protein resides in the postsynaptic density. The protein localises to the cell projection. Its subcellular location is the dendritic spine. It localises to the dendrite. It is found in the cytoplasm. The protein resides in the cytoskeleton. Functionally, may be involved in promoting the maturation of dendritic spines, probably via regulating SIPA1L1 levels at the postsynaptic density of synapses. This Homo sapiens (Human) protein is Leucine zipper putative tumor suppressor 3.